A 92-amino-acid chain; its full sequence is Small ribosomal subunit protein uS19 (92 aa).

The segment at 72 to 92 (GEFSPTRTYTGHGSDKKSKRG) is disordered.

It belongs to the universal ribosomal protein uS19 family.

In terms of biological role, protein S19 forms a complex with S13 that binds strongly to the 16S ribosomal RNA. The chain is Small ribosomal subunit protein uS19 from Gluconobacter oxydans (strain 621H) (Gluconobacter suboxydans).